The chain runs to 278 residues: Protein NIF3 homolog (278 aa).

Belongs to the GTP cyclohydrolase I type 2/NIF3 family.

In Schizosaccharomyces pombe (strain 972 / ATCC 24843) (Fission yeast), this protein is Protein NIF3 homolog.